A 280-amino-acid polypeptide reads, in one-letter code: uncharacterized protein (280 aa).

Disordered regions lie at residues 1–83 and 248–280; these read MELK…EEEQ and IRHR…EARL. Positions 12–25 are enriched in polar residues; the sequence is SAKTDNHTVYQNSP. Basic and acidic residues-rich tracts occupy residues 41–71 and 249–280; these read KQTR…RVDD and RHRE…EARL.

It belongs to the chlamydial CPn_0705/CT_671/TC_0042 family.

This is an uncharacterized protein from Chlamydia pneumoniae (Chlamydophila pneumoniae).